The chain runs to 626 residues: Phosphomethylpyrimidine synthase (626 aa).

The interval 1-22 is disordered; it reads MTKQEKAINLSESAQVDQQSVQ. Polar residues predominate over residues 10-22; that stretch reads LSESAQVDQQSVQ. Substrate is bound by residues N232, M261, Y290, H326, 346 to 348, 387 to 390, and E426; these read SRG and DGLR. H430 serves as a coordination point for Zn(2+). Y453 serves as a coordination point for substrate. H494 is a binding site for Zn(2+). [4Fe-4S] cluster-binding residues include C574, C577, and C582.

This sequence belongs to the ThiC family. As to quaternary structure, homodimer. It depends on [4Fe-4S] cluster as a cofactor.

The enzyme catalyses 5-amino-1-(5-phospho-beta-D-ribosyl)imidazole + S-adenosyl-L-methionine = 4-amino-2-methyl-5-(phosphooxymethyl)pyrimidine + CO + 5'-deoxyadenosine + formate + L-methionine + 3 H(+). The protein operates within cofactor biosynthesis; thiamine diphosphate biosynthesis. Catalyzes the synthesis of the hydroxymethylpyrimidine phosphate (HMP-P) moiety of thiamine from aminoimidazole ribotide (AIR) in a radical S-adenosyl-L-methionine (SAM)-dependent reaction. The protein is Phosphomethylpyrimidine synthase of Pseudomonas putida (strain GB-1).